The primary structure comprises 354 residues: Uroporphyrinogen decarboxylase (354 aa).

Residues 27 to 31, aspartate 77, tyrosine 154, threonine 209, and histidine 327 each bind substrate; that span reads RQAGR.

This sequence belongs to the uroporphyrinogen decarboxylase family. As to quaternary structure, homodimer.

It localises to the cytoplasm. It carries out the reaction uroporphyrinogen III + 4 H(+) = coproporphyrinogen III + 4 CO2. Its pathway is porphyrin-containing compound metabolism; protoporphyrin-IX biosynthesis; coproporphyrinogen-III from 5-aminolevulinate: step 4/4. Functionally, catalyzes the decarboxylation of four acetate groups of uroporphyrinogen-III to yield coproporphyrinogen-III. The polypeptide is Uroporphyrinogen decarboxylase (Actinobacillus pleuropneumoniae serotype 5b (strain L20)).